We begin with the raw amino-acid sequence, 295 residues long: Acetyl-coenzyme A carboxylase carboxyl transferase subunit beta (295 aa).

A disordered region spans residues 1 to 20; sequence MSWLSKLMPSGIRTENTPAK. The region spanning 28 to 295 is the CoA carboxyltransferase N-terminal domain; that stretch reads LWEKCSNCGS…QPHPQDADAA (268 aa). The Zn(2+) site is built by C32, C35, C51, and C54. The segment at 32–54 adopts a C4-type zinc-finger fold; it reads CSNCGSALYGPELEENLEVCPKC.

It belongs to the AccD/PCCB family. As to quaternary structure, acetyl-CoA carboxylase is a heterohexamer composed of biotin carboxyl carrier protein (AccB), biotin carboxylase (AccC) and two subunits each of ACCase subunit alpha (AccA) and ACCase subunit beta (AccD). Zn(2+) serves as cofactor.

Its subcellular location is the cytoplasm. The enzyme catalyses N(6)-carboxybiotinyl-L-lysyl-[protein] + acetyl-CoA = N(6)-biotinyl-L-lysyl-[protein] + malonyl-CoA. It participates in lipid metabolism; malonyl-CoA biosynthesis; malonyl-CoA from acetyl-CoA: step 1/1. Its function is as follows. Component of the acetyl coenzyme A carboxylase (ACC) complex. Biotin carboxylase (BC) catalyzes the carboxylation of biotin on its carrier protein (BCCP) and then the CO(2) group is transferred by the transcarboxylase to acetyl-CoA to form malonyl-CoA. In Xanthomonas campestris pv. campestris (strain 8004), this protein is Acetyl-coenzyme A carboxylase carboxyl transferase subunit beta.